Reading from the N-terminus, the 137-residue chain is Nucleoside diphosphate kinase (137 aa).

Positions 10, 59, 87, 93, 104, and 114 each coordinate ATP. H117 serves as the catalytic Pros-phosphohistidine intermediate.

The protein belongs to the NDK family. In terms of assembly, homotetramer. The cofactor is Mg(2+).

The protein resides in the cytoplasm. It catalyses the reaction a 2'-deoxyribonucleoside 5'-diphosphate + ATP = a 2'-deoxyribonucleoside 5'-triphosphate + ADP. It carries out the reaction a ribonucleoside 5'-diphosphate + ATP = a ribonucleoside 5'-triphosphate + ADP. In terms of biological role, major role in the synthesis of nucleoside triphosphates other than ATP. The ATP gamma phosphate is transferred to the NDP beta phosphate via a ping-pong mechanism, using a phosphorylated active-site intermediate. This chain is Nucleoside diphosphate kinase, found in Streptomyces coelicolor (strain ATCC BAA-471 / A3(2) / M145).